Reading from the N-terminus, the 64-residue chain is Probable tautomerase lp_1712 (64 aa).

Pro2 acts as the Proton acceptor; via imino nitrogen in catalysis.

It belongs to the 4-oxalocrotonate tautomerase family.

This chain is Probable tautomerase lp_1712, found in Lactiplantibacillus plantarum (strain ATCC BAA-793 / NCIMB 8826 / WCFS1) (Lactobacillus plantarum).